We begin with the raw amino-acid sequence, 443 residues long: Protein SCAR (443 aa).

The tract at residues 1-96 is interaction with brk1 and abiA; the sequence is MVLITRYLPS…DYHRNTSIDT (96 aa). Residues 166–201 are a coiled coil; sequence VAEQQKLHEEARQRKRERREARLKKKGEKNEVEVKK. 2 disordered regions span residues 176–197 and 220–386; these read ARQR…KNEV and INIE…RSDL. Residues 178 to 192 show a composition bias toward basic residues; it reads QRKRERREARLKKKG. Over residues 221–252 the composition is skewed to polar residues; the sequence is NIESPHTSSPQIQHQSNNTATPQHTTQHFGTN. 2 stretches are compositionally biased toward low complexity: residues 263–277 and 285–305; these read SQSS…INSY and NTST…TGFN. Residues 306–323 show a composition bias toward pro residues; sequence TPPPPMSNNNNMPPPPPM. Residues 324-338 are compositionally biased toward polar residues; the sequence is QQNGGAANNRLSVHN. The segment covering 346–365 has biased composition (pro residues); that stretch reads PAPPPPPPPPSAPAPPPPPM. Positions 382-399 constitute a WH2 domain; it reads ARSDLLSSIMQGMALKPA.

Belongs to the SCAR/WAVE family. In terms of assembly, part of a Scar/WAVE complex containing brk1, scrA, abiA, pirA and napA. Interacts with brk1 and abiA.

It localises to the cytoplasm. The protein resides in the cytoskeleton. It is found in the cell projection. The protein localises to the pseudopodium tip. Its subcellular location is the filopodium tip. Its function is as follows. Involved in regulation of actin and microtubule organization. Regulates phagocytosis and macropinocytosis. In Dictyostelium discoideum (Social amoeba), this protein is Protein SCAR (scrA).